Reading from the N-terminus, the 189-residue chain is Potassium-transporting ATPase KdpC subunit (189 aa).

The chain crosses the membrane as a helical span at residues 5–25 (LLPALTMLLVFTVITGIVYPL).

Belongs to the KdpC family. The system is composed of three essential subunits: KdpA, KdpB and KdpC.

Its subcellular location is the cell membrane. Part of the high-affinity ATP-driven potassium transport (or Kdp) system, which catalyzes the hydrolysis of ATP coupled with the electrogenic transport of potassium into the cytoplasm. This subunit acts as a catalytic chaperone that increases the ATP-binding affinity of the ATP-hydrolyzing subunit KdpB by the formation of a transient KdpB/KdpC/ATP ternary complex. The polypeptide is Potassium-transporting ATPase KdpC subunit (Mycobacterium bovis (strain ATCC BAA-935 / AF2122/97)).